The following is a 340-amino-acid chain: Probable quinone oxidoreductase (340 aa).

The protein belongs to the zinc-containing alcohol dehydrogenase family. Quinone oxidoreductase subfamily.

It catalyses the reaction 2 a quinone + NADPH + H(+) = 2 a 1,4-benzosemiquinone + NADP(+). This is Probable quinone oxidoreductase from Leishmania amazonensis.